The primary structure comprises 305 residues: Sodium/potassium-transporting ATPase subunit beta-1 (305 aa).

Over 1 to 32 (MAREKSTDDGGGWKKFLWDSEKKQVLGRTGTS) the chain is Cytoplasmic. A helical; Signal-anchor for type II membrane protein membrane pass occupies residues 33-53 (WFKIFVFYLIFYGCLAGIFIG). Over 54 to 305 (TIQVMLLTIS…RFEVKIEVKS (252 aa)) the chain is Extracellular. N-linked (GlcNAc...) asparagine glycosylation is present at asparagine 114. Cysteine 127 and cysteine 150 form a disulfide bridge. N-linked (GlcNAc...) asparagine glycosylation is present at asparagine 159. Residues cysteine 160 and cysteine 176 are joined by a disulfide bond. Residues asparagine 194 and asparagine 267 are each glycosylated (N-linked (GlcNAc...) asparagine). Cysteine 215 and cysteine 278 are disulfide-bonded.

This sequence belongs to the X(+)/potassium ATPases subunit beta family. As to quaternary structure, the sodium/potassium-transporting ATPase is composed of a catalytic alpha subunit, an auxiliary non-catalytic beta subunit and an additional regulatory subunit.

Its subcellular location is the cell membrane. Functionally, this is the non-catalytic component of the active enzyme, which catalyzes the hydrolysis of ATP coupled with the exchange of Na(+) and K(+) ions across the plasma membrane. The beta subunit regulates, through assembly of alpha/beta heterodimers, the number of sodium pumps transported to the plasma membrane. The protein is Sodium/potassium-transporting ATPase subunit beta-1 (atp1b1) of Tetronarce californica (Pacific electric ray).